We begin with the raw amino-acid sequence, 208 residues long: Uracil phosphoribosyltransferase (208 aa).

5-phospho-alpha-D-ribose 1-diphosphate-binding positions include Arg-78, Arg-103, and 130–138; that span reads DPMLATGGS. Uracil-binding positions include Ile-193 and 198–200; that span reads GDA. Asp-199 is a binding site for 5-phospho-alpha-D-ribose 1-diphosphate.

Belongs to the UPRTase family. Mg(2+) is required as a cofactor.

It catalyses the reaction UMP + diphosphate = 5-phospho-alpha-D-ribose 1-diphosphate + uracil. Its pathway is pyrimidine metabolism; UMP biosynthesis via salvage pathway; UMP from uracil: step 1/1. Its activity is regulated as follows. Allosterically activated by GTP. Catalyzes the conversion of uracil and 5-phospho-alpha-D-ribose 1-diphosphate (PRPP) to UMP and diphosphate. This Neisseria meningitidis serogroup C (strain 053442) protein is Uracil phosphoribosyltransferase.